The chain runs to 291 residues: ATP synthase gamma chain 2 (291 aa).

The segment at 187–208 (LLPHPDKDESQDSKPNDATSRW) is disordered. Positions 190–201 (HPDKDESQDSKP) are enriched in basic and acidic residues.

The protein belongs to the ATPase gamma chain family. In terms of assembly, F-type ATPases have 2 components, CF(1) - the catalytic core - and CF(0) - the membrane proton channel. CF(1) has five subunits: alpha(3), beta(3), gamma(1), delta(1), epsilon(1). CF(0) has three main subunits: a, b and c.

Its subcellular location is the cell inner membrane. In terms of biological role, produces ATP from ADP in the presence of a proton gradient across the membrane. The gamma chain is believed to be important in regulating ATPase activity and the flow of protons through the CF(0) complex. The polypeptide is ATP synthase gamma chain 2 (Photobacterium profundum (strain SS9)).